We begin with the raw amino-acid sequence, 466 residues long: Ribulose bisphosphate carboxylase large chain (466 aa).

The residue at position 4 (Lys4) is an N6,N6,N6-trimethyllysine. The substrate site is built by Asn113 and Thr163. Lys165 acts as the Proton acceptor in catalysis. Residue Lys167 participates in substrate binding. The Mg(2+) site is built by Lys191, Asp193, and Glu194. The residue at position 191 (Lys191) is an N6-carboxylysine. His284 (proton acceptor) is an active-site residue. Substrate is bound by residues Arg285, His317, and Ser369.

The protein belongs to the RuBisCO large chain family. Type I subfamily. Heterohexadecamer of 8 large chains and 8 small chains; disulfide-linked. The disulfide link is formed within the large subunit homodimers. The cofactor is Mg(2+). In terms of processing, the disulfide bond which can form in the large chain dimeric partners within the hexadecamer appears to be associated with oxidative stress and protein turnover.

The protein localises to the plastid. It is found in the chloroplast. The enzyme catalyses 2 (2R)-3-phosphoglycerate + 2 H(+) = D-ribulose 1,5-bisphosphate + CO2 + H2O. It carries out the reaction D-ribulose 1,5-bisphosphate + O2 = 2-phosphoglycolate + (2R)-3-phosphoglycerate + 2 H(+). Its function is as follows. RuBisCO catalyzes two reactions: the carboxylation of D-ribulose 1,5-bisphosphate, the primary event in carbon dioxide fixation, as well as the oxidative fragmentation of the pentose substrate in the photorespiration process. Both reactions occur simultaneously and in competition at the same active site. This chain is Ribulose bisphosphate carboxylase large chain, found in Nelsonia canescens (Blue pussyleaf).